The primary structure comprises 175 residues: Gamma-crystallin B (175 aa).

2 Beta/gamma crystallin 'Greek key' domains span residues 2–40 (GKIT…RVES) and 41–83 (GCWM…HLIP). The connecting peptide stretch occupies residues 84-88 (PHSGT). Beta/gamma crystallin 'Greek key' domains lie at 89–129 (YRMK…NVLE) and 130–172 (GSWI…RRVM).

This sequence belongs to the beta/gamma-crystallin family. In terms of assembly, monomer.

Functionally, crystallins are the dominant structural components of the vertebrate eye lens. The polypeptide is Gamma-crystallin B (CRYGB) (Macaca mulatta (Rhesus macaque)).